The primary structure comprises 236 residues: NAD(P)H-hydrate epimerase (236 aa).

The YjeF N-terminal domain maps to 11–217 (AAALDRELMS…SIAKKYDFDV (207 aa)). 61–65 (NNGGD) provides a ligand contact to (6S)-NADPHX. K(+) contacts are provided by Asn62 and Asp123. (6S)-NADPHX-binding positions include 127-133 (GFSFSGE) and Asp156. Residue Ser159 participates in K(+) binding.

It belongs to the NnrE/AIBP family. Requires K(+) as cofactor.

It localises to the cytoplasm. The protein localises to the mitochondrion. The catalysed reaction is (6R)-NADHX = (6S)-NADHX. It carries out the reaction (6R)-NADPHX = (6S)-NADPHX. Its function is as follows. Catalyzes the epimerization of the S- and R-forms of NAD(P)HX, a damaged form of NAD(P)H that is a result of enzymatic or heat-dependent hydration. This is a prerequisite for the S-specific NAD(P)H-hydrate dehydratase to allow the repair of both epimers of NAD(P)HX. In Neurospora crassa (strain ATCC 24698 / 74-OR23-1A / CBS 708.71 / DSM 1257 / FGSC 987), this protein is NAD(P)H-hydrate epimerase.